A 482-amino-acid chain; its full sequence is Auxin transporter-like protein 2 (482 aa).

At 1-58 (MVPAGDQAEEAIVADAGKEEAEVRAAMGVEQDGKFSMTSLLWHGGSVWDAWFSCASNQ) the chain is on the cytoplasmic side. A helical membrane pass occupies residues 59-76 (VAQVLLTLPYSFSQLGML). The Extracellular segment spans residues 77–78 (SG). The chain crosses the membrane as a helical span at residues 79–99 (LLLQVFYGLMGSWTAYLISVL). The Cytoplasmic portion of the chain corresponds to 100–134 (YVEYRARKEKEGVSFKNHVIQWFEVLDGLLGPYWK). A helical membrane pass occupies residues 135-155 (AAGLAFNCTFLLFGSVIQLIA). At 156 to 171 (CASNIYYINDRLDKRT) the chain is on the extracellular side. The chain crosses the membrane as a helical span at residues 172 to 192 (WTYIFGACCSTTVFIPSFHNY). A topological domain (cytoplasmic) is located at residue arginine 193. Residues 194–214 (IWSFLGLGMTTYTAWYLAIAA) form a helical membrane-spanning segment. The Extracellular portion of the chain corresponds to 215–231 (AVHGQVDGVTHSGPSKM). Residues 232 to 252 (VLYFTGATNILYTFGGHAVTV) traverse the membrane as a helical segment. The Cytoplasmic segment spans residues 253 to 265 (EIMHAMWKPQKFK). Residues 266–286 (YIYLVATLYVFTLTLPSASAM) traverse the membrane as a helical segment. The Extracellular segment spans residues 287–313 (YWAFGDALLTHSNAFSLLPRSGWRDAA). The chain crosses the membrane as a helical span at residues 314-334 (VILMLIHQFITFGFACTPLYF). Residues 335–355 (VWEKAIGMHGTRSVLTRALAR) lie on the Cytoplasmic side of the membrane. Residues 356-376 (LPIVVPIWFLAIIFPFFGPIN) traverse the membrane as a helical segment. A topological domain (extracellular) is located at residue serine 377. The chain crosses the membrane as a helical span at residues 378–398 (AVGALLVSFTVYIIPSLSHIL). Over 399–423 (TYRSASARLNAAEKPPPFLPSWSGM) the chain is Cytoplasmic. A helical transmembrane segment spans residues 424–444 (FVVNVFVVAWVLVVGFGLGGW). Residues 445 to 482 (ASVTNFIKQIDTFGLFAKCYQCPPRAHAGAPLPAPPRH) lie on the Extracellular side of the membrane.

The protein belongs to the amino acid/polyamine transporter 2 family. Amino acid/auxin permease (AAAP) (TC 2.A.18.1) subfamily.

It is found in the cell membrane. Carrier protein involved in proton-driven auxin influx. May mediate the formation of auxin gradient from developing leaves (site of auxin biosynthesis) to tips. This chain is Auxin transporter-like protein 2, found in Oryza sativa subsp. japonica (Rice).